The chain runs to 503 residues: Protein DETOXIFICATION 36 (503 aa).

The next 12 membrane-spanning stretches (helical) occupy residues 54–74 (LFHL…MSML), 87–107 (LAAA…LMLG), 137–157 (IVLV…KPLL), 166–186 (VASV…AYAV), 203–223 (SAYI…LSVF), 225–245 (FGWG…IIVL), 271–293 (GLWD…SWYS), 313–333 (LAIC…FNAA), 355–375 (AVTT…ILSW), 399–419 (FLAI…VAVG), 427–447 (AYVN…VLGF), and 456–476 (IWTG…IVTF).

It belongs to the multi antimicrobial extrusion (MATE) (TC 2.A.66.1) family.

The protein localises to the membrane. In Arabidopsis thaliana (Mouse-ear cress), this protein is Protein DETOXIFICATION 36.